The primary structure comprises 181 residues: Adenine phosphoribosyltransferase (181 aa).

The protein belongs to the purine/pyrimidine phosphoribosyltransferase family. As to quaternary structure, homodimer.

Its subcellular location is the cytoplasm. The catalysed reaction is AMP + diphosphate = 5-phospho-alpha-D-ribose 1-diphosphate + adenine. It functions in the pathway purine metabolism; AMP biosynthesis via salvage pathway; AMP from adenine: step 1/1. Its function is as follows. Catalyzes a salvage reaction resulting in the formation of AMP, that is energically less costly than de novo synthesis. The polypeptide is Adenine phosphoribosyltransferase (Psychromonas ingrahamii (strain DSM 17664 / CCUG 51855 / 37)).